The primary structure comprises 261 residues: Ribosome biogenesis protein nsa2 (261 aa).

2 stretches are compositionally biased toward basic and acidic residues: residues 1–36 (MPQN…HKQS) and 66–82 (KQHE…EKDP). Disordered regions lie at residues 1–44 (MPQN…NLRG) and 64–97 (AIKQ…SNPT). Residues 15–22 (GKRLDTEE) carry the Nuclear localization signal motif.

Belongs to the eukaryotic ribosomal protein eS8 family. Ribosome biogenesis protein NSA2 subfamily. Component of the pre-66S ribosomal particle. Interacts with nop7 and rrp1. Interacts with rsa4 (via WD repeats).

The protein localises to the nucleus. It localises to the nucleolus. In terms of biological role, involved in the biogenesis of the 60S ribosomal subunit. May play a part in the quality control of pre-60S particles. The chain is Ribosome biogenesis protein nsa2 (rbg-52) from Neurospora crassa (strain ATCC 24698 / 74-OR23-1A / CBS 708.71 / DSM 1257 / FGSC 987).